We begin with the raw amino-acid sequence, 68 residues long: MKLNEVKEFVKELRGLSQEELAKRENELKKELFDLRFQAAAGQLEQTARLKEVKKQIARIKTVQSEVK.

The protein belongs to the universal ribosomal protein uL29 family.

This chain is Large ribosomal subunit protein uL29, found in Streptococcus sanguinis (strain SK36).